Reading from the N-terminus, the 3210-residue chain is PF 1022-synthetase (3210 aa).

The condensation 1 stretch occupies residues 68-454 (VDDRRHAIGH…VKELDVVTAE (387 aa)). The segment at 483 to 876 (AGDPNKAAVF…GRKDSQVKIR (394 aa)) is adenylation 1. The Carrier 1 domain maps to 1010–1086 (APATGIEVKL…GLVDVIGRDP (77 aa)). Ser-1047 carries the post-translational modification O-(pantetheine 4'-phosphoryl)serine. The interval 1104–1534 (SFAQGRLWFL…RTPIAVLPLT (431 aa)) is condensation 2. Residues 1563–2023 (FRKQVAAHPH…GRMDQQVKIR (461 aa)) form an adenylation 2 region. The segment at 2081–2236 (EGWKDFFESN…YLLEVVESLV (156 aa)) is S-adenosyl-L-methionine-dependent N-methyltransferase. Carrier domains are found at residues 2570–2644 (DPFV…RQGL) and 2668–2742 (TPSD…RLTQ). Residues Ser-2604 and Ser-2702 each carry the O-(pantetheine 4'-phosphoryl)serine modification. The tract at residues 2788-3203 (LDVYPATQMQ…KRMLEELCGN (416 aa)) is condensation 3. Positions 2976–3002 (VIKGNNNTTPPPPPQQQSTPSGAHHAS) are disordered.

It belongs to the NRP synthetase family. Requires pantetheine 4'-phosphate as cofactor.

It carries out the reaction 2 (R)-3-phenyllactate + 2 (R)-lactate + 4 L-leucine + 4 S-adenosyl-L-methionine + 8 ATP = PF1022A + 8 AMP + 4 S-adenosyl-L-homocysteine + 8 diphosphate + 8 H(+). It catalyses the reaction 4 (R)-3-phenyllactate + 4 L-leucine + 4 S-adenosyl-L-methionine + 8 ATP = PF1022B + 8 AMP + 4 S-adenosyl-L-homocysteine + 8 diphosphate + 8 H(+). The enzyme catalyses 3 (R)-3-phenyllactate + (R)-lactate + 4 L-leucine + 4 S-adenosyl-L-methionine + 8 ATP = PF1022C + 8 AMP + 4 S-adenosyl-L-homocysteine + 8 diphosphate + 8 H(+). The catalysed reaction is (R)-3-phenyllactate + 3 (R)-lactate + 4 L-leucine + 4 S-adenosyl-L-methionine + 8 ATP = PF1022D + 8 AMP + 4 S-adenosyl-L-homocysteine + 8 diphosphate + 8 H(+). It carries out the reaction 4 (R)-lactate + 4 L-leucine + 4 S-adenosyl-L-methionine + 8 ATP = PF1022F + 8 AMP + 4 S-adenosyl-L-homocysteine + 8 diphosphate + 8 H(+). Its function is as follows. Nonribosomal peptide synthetase that synthesizes cyclooctadepsipeptides (CODPs) PF 1022 that show powerful broad-spectrum anthelmintic activity with low toxicity in animals. Couples 4 N-methyl-L-leucines and a varying content of alpha-D-hydroxy acids (D-lactates or D-phenyllactates) in an alternative fashion. The enzyme is capable of synthesizing all known natural cyclooctadepsipeptides of the PF1022 type differing in the content of D-lactate and D-phenyllactate, using from 4 D-lactates (PF 1022F) to 4 D-phenyllactates (PF 1022B), respectively. The formation of different PF-related compounds is mainly controlled by the molar ratio of the hydroxy acids. N-methylation of the substrate L-leucine takes place after covalent binding prior to peptide bond formation. The protein is PF 1022-synthetase of Rosellinia sp. (Mycelia sterilia).